The chain runs to 487 residues: Bifunctional protein HldE (487 aa).

The segment at 1–329 (MLHAVETAFY…GALLTDATYE (329 aa)) is ribokinase. Residue 204–207 (NRGE) participates in ATP binding. Asp-274 is a catalytic residue. The interval 356–487 (FTNGCFDLLH…GIVQRISAQK (132 aa)) is cytidylyltransferase.

This sequence in the N-terminal section; belongs to the carbohydrate kinase PfkB family. It in the C-terminal section; belongs to the cytidylyltransferase family. In terms of assembly, homodimer.

The catalysed reaction is D-glycero-beta-D-manno-heptose 7-phosphate + ATP = D-glycero-beta-D-manno-heptose 1,7-bisphosphate + ADP + H(+). The enzyme catalyses D-glycero-beta-D-manno-heptose 1-phosphate + ATP + H(+) = ADP-D-glycero-beta-D-manno-heptose + diphosphate. It participates in nucleotide-sugar biosynthesis; ADP-L-glycero-beta-D-manno-heptose biosynthesis; ADP-L-glycero-beta-D-manno-heptose from D-glycero-beta-D-manno-heptose 7-phosphate: step 1/4. The protein operates within nucleotide-sugar biosynthesis; ADP-L-glycero-beta-D-manno-heptose biosynthesis; ADP-L-glycero-beta-D-manno-heptose from D-glycero-beta-D-manno-heptose 7-phosphate: step 3/4. In terms of biological role, catalyzes the phosphorylation of D-glycero-D-manno-heptose 7-phosphate at the C-1 position to selectively form D-glycero-beta-D-manno-heptose-1,7-bisphosphate. Catalyzes the ADP transfer from ATP to D-glycero-beta-D-manno-heptose 1-phosphate, yielding ADP-D-glycero-beta-D-manno-heptose. In Magnetococcus marinus (strain ATCC BAA-1437 / JCM 17883 / MC-1), this protein is Bifunctional protein HldE.